The primary structure comprises 253 residues: Methionine aminopeptidase (253 aa).

His-78 contacts substrate. Asp-95, Asp-106, and His-169 together coordinate a divalent metal cation. His-176 contacts substrate. Glu-206 and Glu-237 together coordinate a divalent metal cation.

The protein belongs to the peptidase M24A family. Methionine aminopeptidase type 1 subfamily. As to quaternary structure, monomer. It depends on Co(2+) as a cofactor. Requires Zn(2+) as cofactor. Mn(2+) is required as a cofactor. Fe(2+) serves as cofactor.

It catalyses the reaction Release of N-terminal amino acids, preferentially methionine, from peptides and arylamides.. Its function is as follows. Removes the N-terminal methionine from nascent proteins. The N-terminal methionine is often cleaved when the second residue in the primary sequence is small and uncharged (Met-Ala-, Cys, Gly, Pro, Ser, Thr, or Val). Requires deformylation of the N(alpha)-formylated initiator methionine before it can be hydrolyzed. In Helicobacter pylori (strain ATCC 700392 / 26695) (Campylobacter pylori), this protein is Methionine aminopeptidase.